The chain runs to 435 residues: Probable E3 ubiquitin-protein ligase makorin-1 (435 aa).

2 C3H1-type zinc fingers span residues Trp-18–Thr-45 and Lys-48–Pro-75. Residues Leu-81–Pro-109 are disordered. A compositionally biased stretch (pro residues) spans Asp-99 to Val-108. The segment at Gln-155–Val-182 adopts a C3H1-type 3 zinc-finger fold. Residues Cys-183–His-210 form a makorin-type Cys-His region. An RING-type zinc finger spans residues Cys-228–Arg-282. The C3H1-type 4 zinc finger occupies Gly-311–Pro-340. Positions Glu-345–Trp-369 are disordered.

In terms of tissue distribution, weakly expressed in adult brain, heart and kidney.

It catalyses the reaction S-ubiquitinyl-[E2 ubiquitin-conjugating enzyme]-L-cysteine + [acceptor protein]-L-lysine = [E2 ubiquitin-conjugating enzyme]-L-cysteine + N(6)-ubiquitinyl-[acceptor protein]-L-lysine.. It participates in protein modification; protein ubiquitination. Functionally, E3 ubiquitin ligase catalyzing the covalent attachment of ubiquitin moieties onto substrate proteins. This chain is Probable E3 ubiquitin-protein ligase makorin-1, found in Seriola quinqueradiata (Five-ray yellowtail).